The chain runs to 103 residues: NADH-quinone oxidoreductase subunit K 1 (103 aa).

Helical transmembrane passes span 7–27 (ISWFLTLSAILFALGVAGFLF), 31–51 (IITVFMSIELMLNAVNLSFVT), and 63–83 (LFTFFVMVVAAAEAAVGLAII).

It belongs to the complex I subunit 4L family. In terms of assembly, NDH-1 is composed of 14 different subunits. Subunits NuoA, H, J, K, L, M, N constitute the membrane sector of the complex.

It is found in the cell inner membrane. The catalysed reaction is a quinone + NADH + 5 H(+)(in) = a quinol + NAD(+) + 4 H(+)(out). NDH-1 shuttles electrons from NADH, via FMN and iron-sulfur (Fe-S) centers, to quinones in the respiratory chain. The immediate electron acceptor for the enzyme in this species is believed to be ubiquinone. Couples the redox reaction to proton translocation (for every two electrons transferred, four hydrogen ions are translocated across the cytoplasmic membrane), and thus conserves the redox energy in a proton gradient. This is NADH-quinone oxidoreductase subunit K 1 from Solibacter usitatus (strain Ellin6076).